Here is an 876-residue protein sequence, read N- to C-terminus: DNA gyrase subunit A (876 aa).

Residues 34–532 (LPDVRDGLKP…NSVDINIEDL (499 aa)) form the Topo IIA-type catalytic domain. Tyr-122 serves as the catalytic O-(5'-phospho-DNA)-tyrosine intermediate. The GyrA-box signature appears at 559 to 565 (QRRGGKG). A disordered region spans residues 844-876 (DEELDAIDGSAAEGDEDIAPEADTDDDIAEDEE). The span at 856 to 876 (EGDEDIAPEADTDDDIAEDEE) shows a compositional bias: acidic residues.

Belongs to the type II topoisomerase GyrA/ParC subunit family. As to quaternary structure, heterotetramer, composed of two GyrA and two GyrB chains. In the heterotetramer, GyrA contains the active site tyrosine that forms a transient covalent intermediate with DNA, while GyrB binds cofactors and catalyzes ATP hydrolysis.

The protein resides in the cytoplasm. It carries out the reaction ATP-dependent breakage, passage and rejoining of double-stranded DNA.. A type II topoisomerase that negatively supercoils closed circular double-stranded (ds) DNA in an ATP-dependent manner to modulate DNA topology and maintain chromosomes in an underwound state. Negative supercoiling favors strand separation, and DNA replication, transcription, recombination and repair, all of which involve strand separation. Also able to catalyze the interconversion of other topological isomers of dsDNA rings, including catenanes and knotted rings. Type II topoisomerases break and join 2 DNA strands simultaneously in an ATP-dependent manner. The protein is DNA gyrase subunit A of Klebsiella oxytoca.